Consider the following 925-residue polypeptide: Coronin-7 (925 aa).

4 WD repeats span residues C75–P115, P124–E163, A166–Q205, and A209–A253. Residues V419–R461 form a disordered region. Low complexity predominate over residues S429–L460. A phosphoserine mark is found at S462 and S465. K472 participates in a covalent cross-link: Glycyl lysine isopeptide (Lys-Gly) (interchain with G-Cter in ubiquitin). WD repeat units follow at residues Q542 to V582, G592 to K632, and G635 to Q674. K680 participates in a covalent cross-link: Glycyl lysine isopeptide (Lys-Gly) (interchain with G-Cter in ubiquitin). A WD 8 repeat occupies D728–L768. Residues Q858 to D925 are disordered. Over residues S866–Q882 the composition is skewed to low complexity. Over residues L884 to L896 the composition is skewed to basic and acidic residues. The residue at position 915 (S915) is a Phosphoserine.

Belongs to the WD repeat coronin family. Interacts with clathrin adapter AP1 complex. This interaction takes place at Golgi membranes and not AP1-positive endosomal membranes. Interacts (when ubiquitinated at Lys-472) with EPS15. In terms of processing, the membrane-associated form is phosphorylated on tyrosine residues. Post-translationally, ubiquitinated via 'Lys-33'-linked ubiquitin chains by the BCR(KLHL20) E3 ubiquitin ligase complex: 'Lys-33'-linked ubiquitination promotes interaction with EPS15 and facilitates actin polymerization at the trans-Golgi network, thereby facilitating post-Golgi trafficking. Deubiquitinated by ZRANB1/TRABID. Widely expressed. Expressed in the spleen, peripheral leukocytes, testes, brain, thymus and small intestine.

It localises to the golgi apparatus membrane. The protein resides in the golgi apparatus. The protein localises to the trans-Golgi network. It is found in the cytoplasmic vesicle. Its subcellular location is the cytoplasm. It localises to the cytosol. Functionally, F-actin regulator involved in anterograde Golgi to endosome transport: upon ubiquitination via 'Lys-33'-linked ubiquitin chains by the BCR(KLHL20) E3 ubiquitin ligase complex, interacts with EPS15 and localizes to the trans-Golgi network, where it promotes actin polymerization, thereby facilitating post-Golgi trafficking. May play a role in the maintenance of the Golgi apparatus morphology. The polypeptide is Coronin-7 (CORO7) (Homo sapiens (Human)).